The sequence spans 861 residues: MKNDNRIIKNTIKQFKEKLCRDFSQKANITSITRKLAVFIDTILIQLFIKNKLHFGDNFCLLALGSYGRRELQLHSDIDLLILHTEKVSNIQLQRAQKFIQDCWDVGLEVSHQITTVSSCANLASQDLSVISTIMDMFLLCGHGALMEELIYQTHTLHMWPSHQYFFAKLQEQQSRYAKYGETAYNLEPNIKNGPGGLRDLQILLSISKRHFKIKKLAEGIGYGFITDKEYEELKYCQNFLWRVRFALHMLAGKPEERLSFDYQVKLAQFFGYQDQSHILAIEQFMKDYFKVIKRNRELNEMLLQWFNETIVYHQKQKIIRLDDEFQLSNRFIEVRNNRVFKQNPQSILKLFYWLVKRPDIEGVRASTIRLIRESLFLMGKRFRESKETANIFVNIFRTGNDPYDALQRMNRYGVLAHYLDCFATVTGQMQYDLFHAYTVDQHTLFVIRNISRFKKNEYAKQFPLCAKIITALEKPEILYLGALFHDIAKGRGGDHSELGAIEAQQFTQRHYMEAEDSKLIVWLVRYHLLMSQTAQRKDIYDPKTIEQFCQLLPHAKYLDYLYLLTVADICGTNPTLWNAWKDSLLKELYHAAKTRLHKQQELLDEAALISIRKQYAMDILISDGISSRVIQDLWSQFKGKYFLHESPEVIARHTKAILNSKQFPVVIIMPHHSQGGTEVFIYMPHKDERFTITTSVLSNHHVTIQEAAIITCDNQFDLDTYIILDENNQAFLNEQRARDIQKSLCDHLANTGRLPAVSRRRLSRALTHFNVKTQINFIDDNTNHQTQLFLVTNDRPGLLATISRVFLTLNIHLHNAKIATAGERVEDMFYISNQTGYSLNHEEKTILKEKLILEISKSKY.

Residues 1–321 (MKNDNRIIKN…VYHQKQKIIR (321 aa)) form a uridylyltransferase region. Positions 322–678 (LDDEFQLSNR…IMPHHSQGGT (357 aa)) are uridylyl-removing. Residues 440–562 (VDQHTLFVIR…LPHAKYLDYL (123 aa)) form the HD domain. ACT domains follow at residues 679-760 (EVFI…AVSR) and 788-861 (QLFL…KSKY).

Belongs to the GlnD family. The cofactor is Mg(2+).

The enzyme catalyses [protein-PII]-L-tyrosine + UTP = [protein-PII]-uridylyl-L-tyrosine + diphosphate. It catalyses the reaction [protein-PII]-uridylyl-L-tyrosine + H2O = [protein-PII]-L-tyrosine + UMP + H(+). Uridylyltransferase (UTase) activity is inhibited by glutamine, while glutamine activates uridylyl-removing (UR) activity. Its function is as follows. Modifies, by uridylylation and deuridylylation, the PII regulatory proteins (GlnB and homologs), in response to the nitrogen status of the cell that GlnD senses through the glutamine level. Under low glutamine levels, catalyzes the conversion of the PII proteins and UTP to PII-UMP and PPi, while under higher glutamine levels, GlnD hydrolyzes PII-UMP to PII and UMP (deuridylylation). Thus, controls uridylylation state and activity of the PII proteins, and plays an important role in the regulation of nitrogen assimilation and metabolism. The polypeptide is Bifunctional uridylyltransferase/uridylyl-removing enzyme (Legionella pneumophila (strain Lens)).